Consider the following 554-residue polypeptide: CTP synthase (554 aa).

An amidoligase domain region spans residues 1-265 (MTPLIFVTGG…DELVIDQFKL (265 aa)). Residue S13 participates in CTP binding. UTP is bound at residue S13. Residues 14-19 (SLGKGI) and D71 contribute to the ATP site. Mg(2+)-binding residues include D71 and E139. Residues 146-148 (DIE), 186-191 (KTKPTQ), and K222 contribute to the CTP site. Residues 186-191 (KTKPTQ) and K222 each bind UTP. One can recognise a Glutamine amidotransferase type-1 domain in the interval 292-545 (TIAVVGKYVD…VRAAREKKAG (254 aa)). G353 contributes to the L-glutamine binding site. C380 functions as the Nucleophile; for glutamine hydrolysis in the catalytic mechanism. L-glutamine contacts are provided by residues 381–384 (YGMQ), E404, and R471. Catalysis depends on residues H518 and E520.

It belongs to the CTP synthase family. As to quaternary structure, homotetramer.

It catalyses the reaction UTP + L-glutamine + ATP + H2O = CTP + L-glutamate + ADP + phosphate + 2 H(+). The enzyme catalyses L-glutamine + H2O = L-glutamate + NH4(+). The catalysed reaction is UTP + NH4(+) + ATP = CTP + ADP + phosphate + 2 H(+). The protein operates within pyrimidine metabolism; CTP biosynthesis via de novo pathway; CTP from UDP: step 2/2. With respect to regulation, allosterically activated by GTP, when glutamine is the substrate; GTP has no effect on the reaction when ammonia is the substrate. The allosteric effector GTP functions by stabilizing the protein conformation that binds the tetrahedral intermediate(s) formed during glutamine hydrolysis. Inhibited by the product CTP, via allosteric rather than competitive inhibition. Its function is as follows. Catalyzes the ATP-dependent amination of UTP to CTP with either L-glutamine or ammonia as the source of nitrogen. Regulates intracellular CTP levels through interactions with the four ribonucleotide triphosphates. This chain is CTP synthase, found in Xanthomonas campestris pv. campestris (strain B100).